The primary structure comprises 496 residues: 2-methylcitrate dehydratase-like protein oryR (496 aa).

This sequence belongs to the PrpD family.

Its pathway is secondary metabolite biosynthesis. 2-methylcitrate dehydratase-like protein; part of the gene cluster that mediates the biosynthesis of oryzines, natural products with an unusual maleidride backbone. The two subunits of the fungal fatty acid synthase oryfasA and oryfasB probably form octenoic acid. This fatty acid is most likely activated by the acyl-CoA ligase oryP to give octenyl-CoA before the citrate synthase-like protein oryE catalyzes condensation with oxaloacetate to form tricarboxylic acid. The next steps of the pathways are conjectural, but a favorite possible route has been proposed, beginning with decarboxylation and concomitant dehydration by the decarboxylase oryM, followed by tautomerization, which may lead to the production of a diene intermediate. Reduction of this diene intermediate could give the known metabolite piliformic acid. On the pathway to oryzine B and oryzine A, however, hydroxylation of the diene by the alpha-ketoglutarate-dependent dioxygenase oryG and lactonisation by the lactonohydrolases oryH or oryL could give oryzine B directly. Finally, enoyl reduction by the dehydrogenase oryD would then convert oryzine B into oryzine A. The polypeptide is 2-methylcitrate dehydratase-like protein oryR (Aspergillus oryzae (strain ATCC 42149 / RIB 40) (Yellow koji mold)).